The primary structure comprises 705 residues: Glycogen [starch] synthase isoform 2 (705 aa).

Arginine 20 is a UDP binding site. At serine 159 the chain carries Phosphoserine. UDP-alpha-D-glucose contacts are provided by histidine 193 and arginine 199. Positions 280, 281, 283, 286, and 290 each coordinate alpha-D-glucose 6-phosphate. Arginine 320 is a UDP binding site. Arginine 320 lines the UDP-alpha-D-glucose pocket. 2 positions are modified to phosphoserine: serine 363 and serine 467. An alpha-D-glucose 6-phosphate-binding site is contributed by histidine 500. Glutamate 509, tryptophan 511, and glycine 512 together coordinate UDP-alpha-D-glucose. UDP is bound at residue threonine 514. The alpha-D-glucose 6-phosphate site is built by arginine 583 and arginine 587. Serine 651 is modified (phosphoserine). The residue at position 655 (serine 655) is a Phosphoserine; by PHO85. Phosphoserine; by PKA is present on residues serine 661 and serine 663. Threonine 668 carries the phosphothreonine; by PHO85 modification. Positions 686–705 (SLGVNPAADDDDDGPYADDS) are disordered. Positions 693 to 705 (ADDDDDGPYADDS) are enriched in acidic residues.

It belongs to the glycosyltransferase 3 family. In terms of assembly, interacts with PCL10. Phosphorylated by the cyclin-CDK PCL10-PHO85. Phosphorylation causes inactivation of enzyme.

Its subcellular location is the cytoplasm. The protein resides in the cytosol. It carries out the reaction [(1-&gt;4)-alpha-D-glucosyl](n) + UDP-alpha-D-glucose = [(1-&gt;4)-alpha-D-glucosyl](n+1) + UDP + H(+). Its pathway is glycan biosynthesis; glycogen biosynthesis. Allosteric activation by glucose-6-phosphate, and phosphorylation by a cAMP-dependent kinase. Its function is as follows. Glycogen synthase participates in the glycogen biosynthetic process along with glycogenin and glycogen branching enzyme. Extends the primer composed of a few glucose units formed by glycogenin by adding new glucose units to it. In this context, glycogen synthase transfers the glycosyl residue from UDP-Glc to the non-reducing end of alpha-1,4-glucan. This Saccharomyces cerevisiae (strain ATCC 204508 / S288c) (Baker's yeast) protein is Glycogen [starch] synthase isoform 2 (GSY2).